A 491-amino-acid polypeptide reads, in one-letter code: mRNA cleavage and polyadenylation factor clp1 (491 aa).

Glu28 and Lys78 together coordinate ATP. Residues 128 to 160 form a disordered region; that stretch reads RAAAAQAQQQHPTHHQQQQQGRGAGAGVARSKP. Residues 130 to 148 show a composition bias toward low complexity; the sequence is AAAQAQQQHPTHHQQQQQG. 171-176 serves as a coordination point for ATP; it reads GVGKTS.

It belongs to the Clp1 family. Clp1 subfamily. Component of a pre-mRNA cleavage factor complex. Interacts directly with PCF11.

It localises to the nucleus. Its function is as follows. Required for endonucleolytic cleavage during polyadenylation-dependent pre-mRNA 3'-end formation. This is mRNA cleavage and polyadenylation factor clp1 (paa-7) from Neurospora crassa (strain ATCC 24698 / 74-OR23-1A / CBS 708.71 / DSM 1257 / FGSC 987).